The primary structure comprises 888 residues: G-protein coupled receptor family C group 6 member A (888 aa).

A signal peptide spans 1 to 15 (MALLMTCFVIVFAAS). The Extracellular segment spans residues 16–568 (QPCQTPDDLV…KEMEYLDSLA (553 aa)). N-linked (GlcNAc...) asparagine glycans are attached at residues Asn-251, Asn-322, Asn-532, and Asn-544. Residues 569-589 (ILLLALSLLGILFVLAIGIIF) traverse the membrane as a helical segment. Over 590–604 (TRNLNTPVVKSSGEL) the chain is Cytoplasmic. The helical transmembrane segment at 605-625 (MVRYVILFCHFLNFAGTGFFI) threads the bilayer. At 626-641 (REPQSFTCKTRQTLIC) the chain is on the extracellular side. Residues 642–662 (MSFTLCISYILMKSLKILLAF) traverse the membrane as a helical segment. Residues 663–676 (SSKLQNFLKCFYKP) lie on the Cytoplasmic side of the membrane. A helical membrane pass occupies residues 677 to 697 (IPIIFTCTGIVVVCTLLIFAA). Topologically, residues 698 to 718 (PAVGQNVSLPRVIIFECEEGS) are extracellular. The helical transmembrane segment at 719–739 (ILAFGSMLGYAAILAFMCFIC) threads the bilayer. Residues 740–754 (AFKGRKFPENYNEAK) lie on the Cytoplasmic side of the membrane. A helical transmembrane segment spans residues 755 to 775 (FITFGMLIYFIAWITFIPIYT). Over 776–779 (FGKY) the chain is Extracellular. A helical transmembrane segment spans residues 780-800 (MLVVEIIIILISNYGICCMFF). Residues 801–888 (PKCYVILSKQ…ALPPKRISSI (88 aa)) are Cytoplasmic-facing.

It belongs to the G-protein coupled receptor 3 family. In terms of assembly, homodimer; disulfide-linked.

Its subcellular location is the cell membrane. Its function is as follows. Receptor activated by multiple ligands, including osteocalcin (BGLAP), basic amino acids, and various cations. Activated by amino acids with a preference for basic amino acids such as L-Lys, L-Arg and L-ornithine but also by small and polar amino acids. The L-alpha amino acids respond is augmented by divalent cations Ca(2+) and Mg(2+). Seems to act through a G(q)/G(11) and G(i)-coupled pathway. Regulates testosterone production by acting as a ligand for uncarboxylated osteocalcin hormone: osteocalcin-binding at the surface of Leydig cells initiates a signaling response that promotes the expression of enzymes required for testosterone synthesis in a CREB-dependent manner. Mediates the non-genomic effects of androgens in multiple tissue. May coordinate nutritional and hormonal anabolic signals through the sensing of extracellular amino acids, osteocalcin, divalent ions and its responsiveness to anabolic steroids. The sequence is that of G-protein coupled receptor family C group 6 member A (GPRC6A) from Bos taurus (Bovine).